Consider the following 401-residue polypeptide: NADH-quinone oxidoreductase subunit D 2 (401 aa).

This sequence belongs to the complex I 49 kDa subunit family. In terms of assembly, NDH-1 is composed of 14 different subunits. Subunits NuoB, C, D, E, F, and G constitute the peripheral sector of the complex.

It is found in the cell inner membrane. The catalysed reaction is a quinone + NADH + 5 H(+)(in) = a quinol + NAD(+) + 4 H(+)(out). In terms of biological role, NDH-1 shuttles electrons from NADH, via FMN and iron-sulfur (Fe-S) centers, to quinones in the respiratory chain. The immediate electron acceptor for the enzyme in this species is believed to be ubiquinone. Couples the redox reaction to proton translocation (for every two electrons transferred, four hydrogen ions are translocated across the cytoplasmic membrane), and thus conserves the redox energy in a proton gradient. The protein is NADH-quinone oxidoreductase subunit D 2 of Koribacter versatilis (strain Ellin345).